A 708-amino-acid polypeptide reads, in one-letter code: Fatty acid oxidation complex subunit alpha (708 aa).

Residues 1–190 (MSQDKAFTME…KAGLVTEVVP (190 aa)) form an enoyl-CoA hydratase region. Residues 310-708 (DSVKRVGVLG…MLENGWNFYQ (399 aa)) are 3-hydroxyacyl-CoA dehydrogenase.

This sequence in the N-terminal section; belongs to the enoyl-CoA hydratase/isomerase family. In the central section; belongs to the 3-hydroxyacyl-CoA dehydrogenase family. In terms of assembly, heterotetramer of two alpha chains (FadJ) and two beta chains (FadI).

The protein resides in the cytoplasm. The enzyme catalyses a (3S)-3-hydroxyacyl-CoA = a (2E)-enoyl-CoA + H2O. The catalysed reaction is a 4-saturated-(3S)-3-hydroxyacyl-CoA = a (3E)-enoyl-CoA + H2O. It carries out the reaction a (3S)-3-hydroxyacyl-CoA + NAD(+) = a 3-oxoacyl-CoA + NADH + H(+). It catalyses the reaction (3S)-3-hydroxybutanoyl-CoA = (3R)-3-hydroxybutanoyl-CoA. It participates in lipid metabolism; fatty acid beta-oxidation. Its function is as follows. Catalyzes the formation of a hydroxyacyl-CoA by addition of water on enoyl-CoA. Also exhibits 3-hydroxyacyl-CoA epimerase and 3-hydroxyacyl-CoA dehydrogenase activities. The sequence is that of Fatty acid oxidation complex subunit alpha from Idiomarina loihiensis (strain ATCC BAA-735 / DSM 15497 / L2-TR).